The following is a 658-amino-acid chain: Pentatricopeptide repeat-containing protein At1g69290 (658 aa).

2 disordered regions span residues 1–23 and 39–61; these read MFRKTLNSISRRHFSSSSPESPS and TLSPSLSPPQNPKTLTPDQKSSF. Residues 50 to 61 are compositionally biased toward polar residues; that stretch reads PKTLTPDQKSSF. 11 PPR repeats span residues 214 to 249, 250 to 284, 285 to 320, 323 to 353, 361 to 395, 397 to 431, 432 to 466, 467 to 497, 503 to 537, 538 to 568, and 581 to 615; these read DLVASNAALEACCRQMESLADAENVIESMAVLGVKP, DELSFGFLAYLYARKGLREKISELENLMDGFGFAS, RRILYSNMISGYVKSGDLDSVSDVILHSLKEGGEES, SVETYCELVKGFIESKSVKSLAKVILEAQKL, DSSVGFGIINACVNLGFSDKAHSILEEMIAQGGGS, GIGVYVPILKAYCKEYRTAEATQLVTEISSSGLQL, DVEISNALIEASMTNQDFISAFTLFRDMRENRVVD, LKGSYLTIMTGLLENQRPELMAAFLDEVVED, NSHDWNSIIHAFCKSGRLEDARRTFRRMVFLRYEP, NNQTYLSLINGYVSGEKYFNVLLLWNEIKGK, and DHALVDAFLYALVKGGFFDAAMQVVEKSQEMKIFV.

Belongs to the PPR family. P subfamily.

This Arabidopsis thaliana (Mouse-ear cress) protein is Pentatricopeptide repeat-containing protein At1g69290.